Reading from the N-terminus, the 351-residue chain is Cytoplasmic dynein 2 light intermediate chain 1 (351 aa).

Positions 304–335 are disordered; the sequence is TLKAIQDPARDPQYAESEVDEMRVQKDQELEQ. The span at 323-335 shows a compositional bias: basic and acidic residues; sequence DEMRVQKDQELEQ.

Belongs to the dynein light intermediate chain family. Light intermediate chain of the cytoplasmic dynein complex 2, a multisubunit complex composed at least of eleven different proteins. The cytoplasmic dynein 2 complex consists of two catalytic heavy chains (HCs) and a number of non-catalytic subunits presented by intermediate chains (ICs), light intermediate chains (LICs) and light chains (LCs). Among them, a heavy chain (DYNC2H1), two intermediate chains (DYNC2I2 and DYNC2I1), a light intermediate chain (DYNC2LI1), and a light chain (DYNLT2B) are unique to the dynein-2 complex, but a subset of light chains are also shared by dynein-1 and dynein-2 complexes. Dynein-2 complex is built around two copies of cytoplasmic dynein 2 heavy chain 1 (DYNC2H1). The C-terminal region forms the motor domain, which converts the energy from ATP hydrolysis into movement. Its N-terminal region forms the tail, an extended structure that binds the other subunits and holds the two heavy chains in a homodimer. Interacts with DYNC2H1 (via N-terminus); this interaction stabilizes the dynein-2 complex structure.

It localises to the cytoplasm. The protein resides in the cell projection. Its subcellular location is the cilium. The protein localises to the cytoskeleton. It is found in the cilium basal body. It localises to the cilium axoneme. The protein resides in the microtubule organizing center. Its subcellular location is the centrosome. Its function is as follows. Acts as one of several non-catalytic accessory components of the cytoplasmic dynein 2 complex (dynein-2 complex), a motor protein complex that drives the movement of cargos along microtubules within cilia and flagella in concert with the intraflagellar transport (IFT) system, facilitating the assembly of these organelles. Involved in the regulation of ciliary length. The chain is Cytoplasmic dynein 2 light intermediate chain 1 (Dync2li1) from Rattus norvegicus (Rat).